The chain runs to 241 residues: MSASEGISLPGNEETTPPHEKHKQKAKKAKKKSRSAKESVPNAMDAKATASYFSLSIVGQIVSATFPLGPDKEFVFLRYEMVAGPDWQLSSGPQHGLTQLATNRRGHFNEPIVFNMPIEVTYKSTSPYGWPQILVTVFGRSGLGRETLLGYAHIHLPVFGSRRPADQTEQLQAPILMPKCPNMMADITSWLLRREPELKDPKVLLDNLKCKGLSMESYGSLQFQLSSVMRGARKLGYHWHS.

The disordered stretch occupies residues 1 to 42 (MSASEGISLPGNEETTPPHEKHKQKAKKAKKKSRSAKESVPN). Positions 20–34 (EKHKQKAKKAKKKSR) are enriched in basic residues. The C2 B9-type domain occupies 53–197 (FSLSIVGQIV…TSWLLRREPE (145 aa)).

Belongs to the B9D family. As to quaternary structure, probable component of the tectonic-like complex (also named MKS complex), composed of B9d1, B9d2, Cc2d2a, Mks1 and tctn. In terms of tissue distribution, expressed in type I sensory neurons (at protein level). Expressed in spermatids and spermatocytes (at protein level).

It localises to the cytoplasm. The protein localises to the cytoskeleton. Its subcellular location is the cilium basal body. Its function is as follows. Probable component of the tectonic-like complex (also named MKS complex), a complex localized at the transition zone of primary cilia. Required for ciliary structure and function. The protein is B9 domain-containing protein 1 of Drosophila melanogaster (Fruit fly).